The primary structure comprises 185 residues: Ribosome-recycling factor (185 aa).

The protein belongs to the RRF family.

The protein localises to the cytoplasm. Its function is as follows. Responsible for the release of ribosomes from messenger RNA at the termination of protein biosynthesis. May increase the efficiency of translation by recycling ribosomes from one round of translation to another. This Proteus mirabilis (strain HI4320) protein is Ribosome-recycling factor.